An 868-amino-acid polypeptide reads, in one-letter code: Translation initiation factor IF-2 (868 aa).

Positions 201 to 269 are disordered; that stretch reads KEEVKPEKVS…GTEKSDKYRE (69 aa). The span at 249-260 shows a compositional bias: basic residues; it reads RGGRSKFKKKKG. The 170-residue stretch at 368 to 537 folds into the tr-type G domain; that stretch reads GRAPVVTIMG…LLQSEVLELK (170 aa). Residues 377 to 384 form a G1 region; the sequence is GHVDHGKT. 377–384 is a binding site for GTP; sequence GHVDHGKT. Positions 402–406 are G2; sequence GITQH. Residues 423–426 form a G3 region; it reads DTPG. GTP-binding positions include 423 to 427 and 477 to 480; these read DTPGH and NKMD. The interval 477-480 is G4; that stretch reads NKMD. Residues 513 to 515 are G5; it reads SAK.

This sequence belongs to the TRAFAC class translation factor GTPase superfamily. Classic translation factor GTPase family. IF-2 subfamily.

The protein localises to the cytoplasm. One of the essential components for the initiation of protein synthesis. Protects formylmethionyl-tRNA from spontaneous hydrolysis and promotes its binding to the 30S ribosomal subunits. Also involved in the hydrolysis of GTP during the formation of the 70S ribosomal complex. The chain is Translation initiation factor IF-2 from Legionella pneumophila (strain Corby).